Reading from the N-terminus, the 148-residue chain is Large ribosomal subunit protein bL9 (148 aa).

This sequence belongs to the bacterial ribosomal protein bL9 family.

Its function is as follows. Binds to the 23S rRNA. This chain is Large ribosomal subunit protein bL9, found in Lachnoclostridium phytofermentans (strain ATCC 700394 / DSM 18823 / ISDg) (Clostridium phytofermentans).